Consider the following 290-residue polypeptide: 4-hydroxybenzoate octaprenyltransferase (290 aa).

Transmembrane regions (helical) follow at residues 33–53, 99–119, 141–161, 213–233, 234–254, and 268–288; these read LWALWVASPGVPPLWILAVFV, LFVILVLLSFLLVLTLNVKTI, LPQVVLGAAFGWSIPMAFCAV, LIIGLLQIAVLALLGTVGWLN, GLGAFYYAGLAGAGALFIWQQ, and AFLNNNYVGLLVFIGLALSYL.

The protein belongs to the UbiA prenyltransferase family. Mg(2+) is required as a cofactor.

It is found in the cell inner membrane. It carries out the reaction all-trans-octaprenyl diphosphate + 4-hydroxybenzoate = 4-hydroxy-3-(all-trans-octaprenyl)benzoate + diphosphate. It functions in the pathway cofactor biosynthesis; ubiquinone biosynthesis. Its function is as follows. Catalyzes the prenylation of para-hydroxybenzoate (PHB) with an all-trans polyprenyl group. Mediates the second step in the final reaction sequence of ubiquinone-8 (UQ-8) biosynthesis, which is the condensation of the polyisoprenoid side chain with PHB, generating the first membrane-bound Q intermediate 3-octaprenyl-4-hydroxybenzoate. This Cronobacter sakazakii (strain ATCC BAA-894) (Enterobacter sakazakii) protein is 4-hydroxybenzoate octaprenyltransferase.